The sequence spans 626 residues: DNA mismatch repair protein MutL (626 aa).

Residues glutamine 352–alanine 399 are disordered. Residues serine 378–threonine 387 show a composition bias toward polar residues.

Belongs to the DNA mismatch repair MutL/HexB family.

This protein is involved in the repair of mismatches in DNA. It is required for dam-dependent methyl-directed DNA mismatch repair. May act as a 'molecular matchmaker', a protein that promotes the formation of a stable complex between two or more DNA-binding proteins in an ATP-dependent manner without itself being part of a final effector complex. The sequence is that of DNA mismatch repair protein MutL from Brucella anthropi (strain ATCC 49188 / DSM 6882 / CCUG 24695 / JCM 21032 / LMG 3331 / NBRC 15819 / NCTC 12168 / Alc 37) (Ochrobactrum anthropi).